We begin with the raw amino-acid sequence, 337 residues long: Tetraacyldisaccharide 4'-kinase (337 aa).

An ATP-binding site is contributed by 51-58; the sequence is HLGGAGKT.

It belongs to the LpxK family.

The catalysed reaction is a lipid A disaccharide + ATP = a lipid IVA + ADP + H(+). The protein operates within glycolipid biosynthesis; lipid IV(A) biosynthesis; lipid IV(A) from (3R)-3-hydroxytetradecanoyl-[acyl-carrier-protein] and UDP-N-acetyl-alpha-D-glucosamine: step 6/6. Transfers the gamma-phosphate of ATP to the 4'-position of a tetraacyldisaccharide 1-phosphate intermediate (termed DS-1-P) to form tetraacyldisaccharide 1,4'-bis-phosphate (lipid IVA). This Nitrobacter winogradskyi (strain ATCC 25391 / DSM 10237 / CIP 104748 / NCIMB 11846 / Nb-255) protein is Tetraacyldisaccharide 4'-kinase.